The primary structure comprises 2005 residues: Sodium channel protein type 2 subunit alpha (2005 aa).

Topologically, residues 1 to 129 (MAQSVLVPPG…KLAIKILVHS (129 aa)) are cytoplasmic. S4 carries the post-translational modification Phosphoserine. The segment at 28–61 (RIAEEKAKRPKQERKDEDDENGPKPNSDLEAGKS) is disordered. K38 participates in a covalent cross-link: Glycyl lysine isopeptide (Lys-Gly) (interchain with G-Cter in SUMO1). Residues 111-456 (ILTPFNPIRK…QQMLEQLKKQ (346 aa)) form an I repeat. Residues 130-148 (LFNMLIMCTILTNCVFMTM) form a helical membrane-spanning segment. The Extracellular portion of the chain corresponds to 149 to 155 (SNPPDWT). The helical transmembrane segment at 156–176 (KNVEYTFTGIYTFESLIKILA) threads the bilayer. At 177-190 (RGFCLEDFTFLRDP) the chain is on the cytoplasmic side. Residues 191-208 (WNWLDFTVITFAYVTEFV) traverse the membrane as a helical segment. At 209–214 (DLGNVS) the chain is on the extracellular side. An N-linked (GlcNAc...) asparagine glycan is attached at N212. Residues 215-231 (ALRTFRVLRALKTISVI) form a helical membrane-spanning segment. The Cytoplasmic segment spans residues 232–250 (PGLKTIVGALIQSVKKLSD). Residues 251–270 (VMILTVFCLSVFALIGLQLF) form a helical membrane-spanning segment. Residues 271–369 (MGNLRNKCLQ…PNYGYTSFDT (99 aa)) are Extracellular-facing. A disulfide bridge connects residues C278 and C338. N-linked (GlcNAc...) asparagine glycans are attached at residues N285, N291, N297, N303, N308, and N340. The segment at residues 370 to 394 (FSWAFLSLFRLMTQDFWENLYQLTL) is an intramembrane region (pore-forming). At 395–401 (RAAGKTY) the chain is on the extracellular side. Residues 402–422 (MIFFVLVIFLGSFYLINLILA) traverse the membrane as a helical segment. Residues 423 to 759 (VVAMAYEEQN…HLVNLVVMDP (337 aa)) are Cytoplasmic-facing. Phosphoserine is present on residues S468, S471, S484, S526, S528, S531, S553, S554, S558, S573, S576, S589, S610, S623, S686, S687, and S721. Residues 494 to 529 (SSKSEKELKNRRKKKKQKEQSGEEEKNDRVRKSESE) form a disordered region. The span at 511–529 (KEQSGEEEKNDRVRKSESE) shows a compositional bias: basic and acidic residues. Positions 590 to 610 (ENDFADDEHSTFEDNDSRRDS) are disordered. A compositionally biased stretch (basic and acidic residues) spans 596-610 (DEHSTFEDNDSRRDS). One copy of the II repeat lies at 741 to 1013 (CCKPWLKVKH…QIAVGRMQKG (273 aa)). A helical membrane pass occupies residues 760–778 (FVDLAITICIVLNTLFMAM). Residues 779-789 (EHYPMTEQFSS) are Extracellular-facing. A helical transmembrane segment spans residues 790 to 809 (VLSVGNLVFTGIFTAEMFLK). Residues 810–823 (IIAMDPYYYFQEGW) are Cytoplasmic-facing. Residues 824-843 (NIFDGFIVSLSLMELGLANV) form a helical membrane-spanning segment. The Extracellular portion of the chain corresponds to 844–845 (EG). A helical transmembrane segment spans residues 846 to 863 (LSVLRSFRLLRVFKLAKS). The Cytoplasmic segment spans residues 864-879 (WPTLNMLIKIIGNSVG). Residues 880-898 (ALGNLTLVLAIIVFIFAVV) form a helical membrane-spanning segment. Residues 899-927 (GMQLFGKSYKECVCKISNDCELPRWHMHD) lie on the Extracellular side of the membrane. Residues C912 and C918 are joined by a disulfide bond. The segment at 917–918 (DC) is binds SCN2B. Positions 928 to 948 (FFHSFLIVFRVLCGEWIETMW) form an intramembrane region, pore-forming. The Extracellular portion of the chain corresponds to 949-961 (DCMEVAGQTMCLT). Cysteines 950 and 959 form a disulfide. A helical transmembrane segment spans residues 962–982 (VFMMVMVIGNLVVLNLFLALL). Topologically, residues 983–1209 (LSSFSSDNLA…TCYKIVEHNW (227 aa)) are cytoplasmic. The tract at residues 1120–1165 (EEFSSESDMEESKEKLNATSSSEGSTVDIGAPAEGEQPEVEPEESL) is disordered. The segment covering 1155–1165 (EQPEVEPEESL) has biased composition (acidic residues). Residues 1190-1504 (KGKLWWNLRK…KKYYNAMKKL (315 aa)) form an III repeat. Residues 1210–1227 (FETFIVFMILLSSGALAF) traverse the membrane as a helical segment. Over 1228–1240 (EDIYIEQRKTIKT) the chain is Extracellular. Residues 1241-1259 (MLEYADKVFTYIFILEMLL) traverse the membrane as a helical segment. Over 1260–1273 (KWVAYGFQVYFTNA) the chain is Cytoplasmic. The helical transmembrane segment at 1274 to 1292 (WCWLDFLIVDVSLVSLTAN) threads the bilayer. The Extracellular segment spans residues 1293-1300 (ALGYSELG). Residues 1301 to 1319 (AIKSLRTLRALRPLRALSR) traverse the membrane as a helical segment. Over 1320–1336 (FEGMRVVVNALLGAIPS) the chain is Cytoplasmic. A helical transmembrane segment spans residues 1337–1356 (IMNVLLVCLIFWLIFSIMGV). Over 1357-1408 (NLFAGKFYHCINYTTGEMFDVSVVNNYSECKALIESNQTARWKNVKVNFDNV) the chain is Extracellular. A disulfide bridge links C1366 with C1386. N-linked (GlcNAc...) asparagine glycans are attached at residues N1368, N1382, and N1393. The pore-forming intramembrane region spans 1409–1430 (GLGYLSLLQVATFKGWMDIMYA). At 1431-1447 (AVDSRNVELQPKYEDNL) the chain is on the extracellular side. The helical transmembrane segment at 1448 to 1469 (YMYLYFVIFIIFGSFFTLNLFI) threads the bilayer. Topologically, residues 1470–1532 (GVIIDNFNQQ…MVFDFVTKQV (63 aa)) are cytoplasmic. The residue at position 1506 (S1506) is a Phosphoserine; by PKC. An IV repeat occupies 1513 to 1811 (IPRPANKFQG…WEKFDPDATQ (299 aa)). A helical membrane pass occupies residues 1533-1550 (FDISIMILICLNMVTMMV). Residues 1551-1561 (ETDDQSQEMTN) are Extracellular-facing. A helical transmembrane segment spans residues 1562–1580 (ILYWINLVFIVLFTGECVL). Over 1581–1592 (KLISLRYYYFTI) the chain is Cytoplasmic. Residues 1593-1610 (GWNIFDFVVVILSIVGMF) form a helical membrane-spanning segment. Residues 1611-1623 (LAELIEKYFVSPT) are Extracellular-facing. The helical transmembrane segment at 1624–1640 (LFRVIRLARIGRILRLI) threads the bilayer. The Cytoplasmic portion of the chain corresponds to 1641–1659 (KGAKGIRTLLFALMMSLPA). Residues 1660–1677 (LFNIGLLLFLVMFIYAIF) traverse the membrane as a helical segment. The Extracellular segment spans residues 1678-1699 (GMSNFAYVKREVGIDDMFNFET). Positions 1700–1722 (FGNSMICLFQITTSAGWDGLLAP) form an intramembrane region, pore-forming. Residues 1723 to 1752 (ILNSGPPDCDPDKDHPGSSVKGDCGNPSVG) lie on the Extracellular side of the membrane. A disulfide bridge links C1731 with C1746. A helical transmembrane segment spans residues 1753-1775 (IFFFVSYIIISFLVVVNMYIAVI). At 1776-2005 (LENFSVATEE…KGKDIRESKK (230 aa)) the chain is on the cytoplasmic side. Residues 1905-1934 (EEVSAIIIQRAYRRYLLKQKVKKVSSIYKK) enclose the IQ domain. At S1930 the chain carries Phosphoserine. Basic and acidic residues predominate over residues 1935–1964 (DKGKECDGTPIKEDTLIDKLNENSTPEKTD). The disordered stretch occupies residues 1935 to 2005 (DKGKECDGTP…KGKDIRESKK (71 aa)). T1943, T1963, and T1966 each carry phosphothreonine. S1971 carries the post-translational modification Phosphoserine. The segment covering 1979 to 2005 (TKPEKEKFEKDKSEKEDKGKDIRESKK) has biased composition (basic and acidic residues).

Belongs to the sodium channel (TC 1.A.1.10) family. Nav1.2/SCN2A subfamily. In terms of assembly, heterooligomer of a large alpha subunit and a smaller beta subunit. Heterooligomer with SCN2B or SCN4B; disulfide-linked. Heterooligomer with SCN1B or SCN3B; non-covalently linked. Interacts with NEDD4L. Interacts with CALM. Interacts with TMEM233. Interacts with the conotoxin GVIIJ. Interacts with the spider beta/delta-theraphotoxin-Pre1a. Interacts with the conotoxin KIIIA. Interacts with the spider protoxin-II. Post-translationally, may be ubiquitinated by NEDD4L; which would promote its endocytosis. Phosphorylation at Ser-1506 by PKC in a highly conserved cytoplasmic loop slows inactivation of the sodium channel and reduces peak sodium currents. In terms of processing, sumoylated at Lys-38. Sumoylation is induced by hypoxia, increases voltage-gated sodium current and mediates the early response to acute hypoxia in neurons. Sumoylated SCN2A is located at the cell membrane.

The protein resides in the cell membrane. It carries out the reaction Na(+)(in) = Na(+)(out). Mediates the voltage-dependent sodium ion permeability of excitable membranes. Assuming opened or closed conformations in response to the voltage difference across the membrane, the protein forms a sodium-selective channel through which Na(+) ions may pass in accordance with their electrochemical gradient. Implicated in the regulation of hippocampal replay occurring within sharp wave ripples (SPW-R) important for memory. The protein is Sodium channel protein type 2 subunit alpha of Homo sapiens (Human).